A 157-amino-acid chain; its full sequence is Endoribonuclease YbeY (157 aa).

Zn(2+)-binding residues include H122, H126, and H132.

Belongs to the endoribonuclease YbeY family. Zn(2+) is required as a cofactor.

The protein localises to the cytoplasm. In terms of biological role, single strand-specific metallo-endoribonuclease involved in late-stage 70S ribosome quality control and in maturation of the 3' terminus of the 16S rRNA. In Bacillus velezensis (strain DSM 23117 / BGSC 10A6 / LMG 26770 / FZB42) (Bacillus amyloliquefaciens subsp. plantarum), this protein is Endoribonuclease YbeY.